A 44-amino-acid chain; its full sequence is Cytochrome b559 subunit beta (44 aa).

Residues 19–35 (WLSIHALAVPTIFFLGS) form a helical membrane-spanning segment. Position 23 (His23) interacts with heme.

Belongs to the PsbE/PsbF family. As to quaternary structure, heterodimer of an alpha subunit and a beta subunit. PSII is composed of 1 copy each of membrane proteins PsbA, PsbB, PsbC, PsbD, PsbE, PsbF, PsbH, PsbI, PsbJ, PsbK, PsbL, PsbM, PsbT, PsbX, PsbY, PsbZ, Psb30/Ycf12, at least 3 peripheral proteins of the oxygen-evolving complex and a large number of cofactors. It forms dimeric complexes. Heme b serves as cofactor.

The protein resides in the plastid. It is found in the chloroplast thylakoid membrane. This b-type cytochrome is tightly associated with the reaction center of photosystem II (PSII). PSII is a light-driven water:plastoquinone oxidoreductase that uses light energy to abstract electrons from H(2)O, generating O(2) and a proton gradient subsequently used for ATP formation. It consists of a core antenna complex that captures photons, and an electron transfer chain that converts photonic excitation into a charge separation. This Tetradesmus obliquus (Green alga) protein is Cytochrome b559 subunit beta.